A 188-amino-acid polypeptide reads, in one-letter code: GMP synthase [glutamine-hydrolyzing] subunit A (188 aa).

Residues 2–188 (KIAVIYFGGQ…FKNFIEACKK (187 aa)) enclose the Glutamine amidotransferase type-1 domain. Residue Cys-79 is the Nucleophile of the active site. Active-site residues include His-166 and Glu-168.

In terms of assembly, heterodimer composed of a glutamine amidotransferase subunit (A) and a GMP-binding subunit (B).

The catalysed reaction is XMP + L-glutamine + ATP + H2O = GMP + L-glutamate + AMP + diphosphate + 2 H(+). Its pathway is purine metabolism; GMP biosynthesis; GMP from XMP (L-Gln route): step 1/1. Functionally, catalyzes the synthesis of GMP from XMP. The chain is GMP synthase [glutamine-hydrolyzing] subunit A from Sulfurisphaera tokodaii (strain DSM 16993 / JCM 10545 / NBRC 100140 / 7) (Sulfolobus tokodaii).